Reading from the N-terminus, the 415-residue chain is Intron-encoded DNA endonuclease aI3 (415 aa).

The COX1 exons 1 to 3 encoded stretch occupies residues 1-81 (MVQRWLYSTN…MPALIGGFGN (81 aa)). 2 helical membrane passes run 16–36 (VLYF…SLII) and 57–77 (VLVV…ALIG). A COX1 intron 3 encoded region spans residues 82–415 (QKRYESNNNN…HLKNTYLENK (334 aa)).

The protein in the C-terminal section; belongs to the LAGLIDADG endonuclease family. Mg(2+) is required as a cofactor. Post-translationally, the mature protein may arise from proteolytic cleavage of an in-frame translation of some COX1 exons plus the intron containing the aI3 open reading frame.

Its subcellular location is the mitochondrion. It localises to the membrane. Its function is as follows. Mitochondrial DNA endonuclease involved in intron homing. It introduces a specific double-strand break in the DNA of the COX1 gene and thus mediates the insertion of an intron, containing its own coding sequence (group I intron), into an intronless gene. Recognizes with high specificity and cleaves the sequence 5'-GGTTTTGGTAACTATTTATTAC-3'. In Saccharomyces cerevisiae (strain ATCC 204508 / S288c) (Baker's yeast), this protein is Intron-encoded DNA endonuclease aI3 (AI3).